A 256-amino-acid chain; its full sequence is Acetyl-coenzyme A carboxylase carboxyl transferase subunit alpha (256 aa).

A CoA carboxyltransferase C-terminal domain is found at 1-236; the sequence is MTKITRIVRE…KQELLVELEQ (236 aa).

The protein belongs to the AccA family. As to quaternary structure, acetyl-CoA carboxylase is a heterohexamer composed of biotin carboxyl carrier protein (AccB), biotin carboxylase (AccC) and two subunits each of ACCase subunit alpha (AccA) and ACCase subunit beta (AccD).

It localises to the cytoplasm. The catalysed reaction is N(6)-carboxybiotinyl-L-lysyl-[protein] + acetyl-CoA = N(6)-biotinyl-L-lysyl-[protein] + malonyl-CoA. The protein operates within lipid metabolism; malonyl-CoA biosynthesis; malonyl-CoA from acetyl-CoA: step 1/1. Its function is as follows. Component of the acetyl coenzyme A carboxylase (ACC) complex. First, biotin carboxylase catalyzes the carboxylation of biotin on its carrier protein (BCCP) and then the CO(2) group is transferred by the carboxyltransferase to acetyl-CoA to form malonyl-CoA. The protein is Acetyl-coenzyme A carboxylase carboxyl transferase subunit alpha of Streptococcus gordonii (strain Challis / ATCC 35105 / BCRC 15272 / CH1 / DL1 / V288).